Reading from the N-terminus, the 770-residue chain is Jhy protein (770 aa).

Disordered regions lie at residues Met1–Tyr249, Thr295–Ser438, His493–Glu527, Glu595–Val647, and Asp708–Gly740. Residues Ser57–Glu71 show a composition bias toward basic and acidic residues. The segment covering Pro72–Glu85 has biased composition (acidic residues). Positions His112 to Gly134 are enriched in basic and acidic residues. Low complexity predominate over residues Ser218 to Ser229. Residues Thr295–His314 are compositionally biased toward basic and acidic residues. Residues Arg340–Arg354 show a composition bias toward polar residues. The segment covering Arg355–Gly370 has biased composition (basic residues). Over residues Gln383–Gln398 the composition is skewed to low complexity. Positions Ala410–Ser438 are enriched in polar residues. A compositionally biased stretch (basic and acidic residues) spans His493 to Met509. Basic residues-rich tracts occupy residues Asn510 to Ala521 and Gly625 to Tyr642.

Expressed in the brain, specifically in hypothalamus, pineal gland, and ependymal cells of the aqueduct of Sylvius, as well as in the choroid plexus of the third ventricle. Expressed in the ependymal cells lining the lateral ventricles (at protein level).

Its function is as follows. Required for the normal development of cilia in brain ependymal cells lining the ventricular surfaces. The chain is Jhy protein from Mus musculus (Mouse).